Reading from the N-terminus, the 536-residue chain is CRISPR-associated DNA-binding protein Cas12m (536 aa).

A recognition domain (REC1-N) region spans residues 1–59 (MPFGKKARHVKAYQFGADAPQEGMEAVLEQHRLRTDYYNALVEMELRQREERTALLANL). Positions 60-105 (AAESGLESPNQVYERLKAAGEKGIRKHPEYVAARERQKALYGHPRL) are recognition domain (REC2). Residues 106 to 159 (LELQSRQREERNALRRSFGAKGLYSSNYLDVERAFDKARQSPELRFRRYSPHEG) form a recognition domain (REC1-C) region. Residues 160-257 (RLAVLYTEGL…RWTVSVVVEV (98 aa)) are wedge domain (WED). A linker region spans residues 258–270 (EGPPVASPTGRGA). The segment at 271 to 481 (VAVDLGWRRV…QRGKPVRKLN (211 aa)) is ruvC-I. The interval 482-516 (PAHTTTDCHACGGALVGDPAKELRLYCPTCERFYD) is target nucleic-acid binding (TNB). 4 residues coordinate Zn(2+): C489, C492, C508, and C511. Residues 517-536 (QDENAARNLLRRAQEVQAQV) are ruvC-II. D518 serves as a coordination point for Mg(2+).

Belongs to the CRISPR-associated DNA-binding protein Cas12m family. Requires Mg(2+) as cofactor. Zn(2+) serves as cofactor.

Its activity is regulated as follows. Pre-crRNA processing is inhibited by EDTA. Functionally, CRISPR (clustered regularly interspaced short palindromic repeat), is an adaptive immune system that provides protection against mobile genetic elements (viruses, transposable elements and conjugative plasmids). CRISPR clusters contain sequences complementary to antecedent mobile elements and target invading nucleic acids. CRISPR clusters are transcribed and processed into CRISPR RNA (crRNA). Recognizes a short motif in the CRISPR repeat sequences (the 5' PAM or protospacer adjacent motif, 5'-TT/CN-3' in this organism) to help distinguish self versus nonself, as targets within the bacterial CRISPR locus do not have PAMs. Cas12m-crRNA binds DNA in a PAM-dependent, crRNA-guided fashion. DNA-binding probably inhibits transcription, leading to gene silencing. No dsDNA, ssDNA or RNA nuclease activity is seen for the crRNA-Cas12m complex. Upon expression in E.coli as a CRISPR region preferentially binds to its associated crRNA. Is required to process pre-crRNA to mature crRNA without a tracrRNA; processing is Mg(2+)-dependent and does not require the predicted RuvC domain catalytic site. The chain is CRISPR-associated DNA-binding protein Cas12m from Allomeiothermus silvanus (strain ATCC 700542 / DSM 9946 / NBRC 106475 / NCIMB 13440 / VI-R2) (Thermus silvanus).